A 510-amino-acid polypeptide reads, in one-letter code: ATP synthase subunit alpha (510 aa).

ATP is bound at residue 169 to 176; the sequence is GDRQTGKT.

Belongs to the ATPase alpha/beta chains family. In terms of assembly, F-type ATPases have 2 components, CF(1) - the catalytic core - and CF(0) - the membrane proton channel. CF(1) has five subunits: alpha(3), beta(3), gamma(1), delta(1), epsilon(1). CF(0) has three main subunits: a(1), b(2) and c(9-12). The alpha and beta chains form an alternating ring which encloses part of the gamma chain. CF(1) is attached to CF(0) by a central stalk formed by the gamma and epsilon chains, while a peripheral stalk is formed by the delta and b chains.

The protein resides in the cell inner membrane. It carries out the reaction ATP + H2O + 4 H(+)(in) = ADP + phosphate + 5 H(+)(out). In terms of biological role, produces ATP from ADP in the presence of a proton gradient across the membrane. The alpha chain is a regulatory subunit. In Anaeromyxobacter dehalogenans (strain 2CP-C), this protein is ATP synthase subunit alpha.